The chain runs to 155 residues: 6,7-dimethyl-8-ribityllumazine synthase (155 aa).

5-amino-6-(D-ribitylamino)uracil contacts are provided by residues W24, 58-60, and 82-84; these read AFE and AVI. 87-88 is a binding site for (2S)-2-hydroxy-3-oxobutyl phosphate; the sequence is GT. H90 functions as the Proton donor in the catalytic mechanism. 5-amino-6-(D-ribitylamino)uracil is bound at residue F115. R129 serves as a coordination point for (2S)-2-hydroxy-3-oxobutyl phosphate.

It belongs to the DMRL synthase family. In terms of assembly, forms an icosahedral capsid composed of 60 subunits, arranged as a dodecamer of pentamers.

The catalysed reaction is (2S)-2-hydroxy-3-oxobutyl phosphate + 5-amino-6-(D-ribitylamino)uracil = 6,7-dimethyl-8-(1-D-ribityl)lumazine + phosphate + 2 H2O + H(+). It functions in the pathway cofactor biosynthesis; riboflavin biosynthesis; riboflavin from 2-hydroxy-3-oxobutyl phosphate and 5-amino-6-(D-ribitylamino)uracil: step 1/2. Its function is as follows. Catalyzes the formation of 6,7-dimethyl-8-ribityllumazine by condensation of 5-amino-6-(D-ribitylamino)uracil with 3,4-dihydroxy-2-butanone 4-phosphate. This is the penultimate step in the biosynthesis of riboflavin. This is 6,7-dimethyl-8-ribityllumazine synthase from Teredinibacter turnerae (strain ATCC 39867 / T7901).